The sequence spans 171 residues: Large ribosomal subunit protein uL10 (171 aa).

The protein belongs to the universal ribosomal protein uL10 family. In terms of assembly, part of the ribosomal stalk of the 50S ribosomal subunit. The N-terminus interacts with L11 and the large rRNA to form the base of the stalk. The C-terminus forms an elongated spine to which L12 dimers bind in a sequential fashion forming a multimeric L10(L12)X complex.

Its function is as follows. Forms part of the ribosomal stalk, playing a central role in the interaction of the ribosome with GTP-bound translation factors. This is Large ribosomal subunit protein uL10 from Paracoccus denitrificans (strain Pd 1222).